A 577-amino-acid chain; its full sequence is Arginine--tRNA ligase (577 aa).

The 'HIGH' region signature appears at 122–132 (PNVAKEMHVGH).

This sequence belongs to the class-I aminoacyl-tRNA synthetase family. In terms of assembly, monomer.

The protein resides in the cytoplasm. The catalysed reaction is tRNA(Arg) + L-arginine + ATP = L-arginyl-tRNA(Arg) + AMP + diphosphate. The chain is Arginine--tRNA ligase from Salmonella paratyphi A (strain ATCC 9150 / SARB42).